A 185-amino-acid chain; its full sequence is Thiol:disulfide interchange protein DsbE (185 aa).

Residues 1–4 lie on the Cytoplasmic side of the membrane; it reads MKRN. A helical transmembrane segment spans residues 5–25; that stretch reads VLLLPLLIFLLIAAALLWQLA. Residues 26–185 lie on the Periplasmic side of the membrane; that stretch reads RNAQGDDPTN…WDRYSREAAQ (160 aa). One can recognise a Thioredoxin domain in the interval 39–177; that stretch reads ALTGKPVPAF…WESELKPLWD (139 aa). C80 and C83 form a disulfide bridge.

It belongs to the thioredoxin family. DsbE subfamily.

Its subcellular location is the cell inner membrane. In terms of biological role, involved in disulfide bond formation. Catalyzes a late, reductive step in the assembly of periplasmic c-type cytochromes, probably the reduction of disulfide bonds of the apocytochrome c to allow covalent linkage with the heme. Possible subunit of a heme lyase. The polypeptide is Thiol:disulfide interchange protein DsbE (dsbE1) (Salmonella typhimurium (strain LT2 / SGSC1412 / ATCC 700720)).